The primary structure comprises 433 residues: Serine hydroxymethyltransferase (433 aa).

(6S)-5,6,7,8-tetrahydrofolate is bound by residues L127 and 131 to 133; that span reads GHL. An N6-(pyridoxal phosphate)lysine modification is found at K236.

It belongs to the SHMT family. In terms of assembly, homodimer. It depends on pyridoxal 5'-phosphate as a cofactor.

Its subcellular location is the cytoplasm. The enzyme catalyses (6R)-5,10-methylene-5,6,7,8-tetrahydrofolate + glycine + H2O = (6S)-5,6,7,8-tetrahydrofolate + L-serine. Its pathway is one-carbon metabolism; tetrahydrofolate interconversion. The protein operates within amino-acid biosynthesis; glycine biosynthesis; glycine from L-serine: step 1/1. In terms of biological role, catalyzes the reversible interconversion of serine and glycine with tetrahydrofolate (THF) serving as the one-carbon carrier. This reaction serves as the major source of one-carbon groups required for the biosynthesis of purines, thymidylate, methionine, and other important biomolecules. Also exhibits THF-independent aldolase activity toward beta-hydroxyamino acids, producing glycine and aldehydes, via a retro-aldol mechanism. This chain is Serine hydroxymethyltransferase, found in Corynebacterium urealyticum (strain ATCC 43042 / DSM 7109).